The sequence spans 230 residues: Translation initiation factor IF-3 (230 aa).

2 disordered regions span residues 1-21 (MAIQHRDPRGGGGSRDARTNR) and 184-230 (LQSQ…AAQR). The segment covering 193 to 208 (AAAAAAPAAAPAAGAP) has biased composition (low complexity). Residues 209–220 (APAPAPAAPAPA) are compositionally biased toward pro residues. Low complexity predominate over residues 221–230 (PTAADPAAQR).

The protein belongs to the IF-3 family. As to quaternary structure, monomer.

The protein resides in the cytoplasm. In terms of biological role, IF-3 binds to the 30S ribosomal subunit and shifts the equilibrium between 70S ribosomes and their 50S and 30S subunits in favor of the free subunits, thus enhancing the availability of 30S subunits on which protein synthesis initiation begins. The chain is Translation initiation factor IF-3 from Anaeromyxobacter dehalogenans (strain 2CP-1 / ATCC BAA-258).